The chain runs to 156 residues: Transcription elongation factor GreA (156 aa).

Residues 44–67 (ENAEYEAAKEKQAMIEGRIQDLCQ) are a coiled coil.

It belongs to the GreA/GreB family.

In terms of biological role, necessary for efficient RNA polymerase transcription elongation past template-encoded arresting sites. The arresting sites in DNA have the property of trapping a certain fraction of elongating RNA polymerases that pass through, resulting in locked ternary complexes. Cleavage of the nascent transcript by cleavage factors such as GreA or GreB allows the resumption of elongation from the new 3'terminus. GreA releases sequences of 2 to 3 nucleotides. In Syntrophobacter fumaroxidans (strain DSM 10017 / MPOB), this protein is Transcription elongation factor GreA.